Here is a 345-residue protein sequence, read N- to C-terminus: uncharacterized protein (345 aa).

Position 1 (methionine 1) is a domain, TBDR plug. A TBDR beta-barrel domain is found at 1–345; that stretch reads MDLGPIYNTR…EVILNTKIEF (345 aa). The TonB C-terminal box signature appears at 328–345; the sequence is PVALGYAREVILNTKIEF.

Belongs to the TonB-dependent receptor family.

The protein localises to the cell outer membrane. This is an uncharacterized protein from Haemophilus influenzae (strain ATCC 51907 / DSM 11121 / KW20 / Rd).